A 150-amino-acid chain; its full sequence is Urease accessory protein UreE (150 aa).

Belongs to the UreE family.

Its subcellular location is the cytoplasm. Its function is as follows. Involved in urease metallocenter assembly. Binds nickel. Probably functions as a nickel donor during metallocenter assembly. The polypeptide is Urease accessory protein UreE (Staphylococcus aureus (strain MRSA252)).